We begin with the raw amino-acid sequence, 699 residues long: Elongation factor G (699 aa).

Positions 8 to 283 (EHIRNIGICA…AVVDFLPSPI (276 aa)) constitute a tr-type G domain. GTP is bound by residues 17–24 (AHIDAGKT), 81–85 (DTPGH), and 135–138 (NKMD).

It belongs to the TRAFAC class translation factor GTPase superfamily. Classic translation factor GTPase family. EF-G/EF-2 subfamily.

Its subcellular location is the cytoplasm. Its function is as follows. Catalyzes the GTP-dependent ribosomal translocation step during translation elongation. During this step, the ribosome changes from the pre-translocational (PRE) to the post-translocational (POST) state as the newly formed A-site-bound peptidyl-tRNA and P-site-bound deacylated tRNA move to the P and E sites, respectively. Catalyzes the coordinated movement of the two tRNA molecules, the mRNA and conformational changes in the ribosome. The protein is Elongation factor G of Rickettsia rickettsii.